A 212-amino-acid chain; its full sequence is Glycerol-3-phosphate acyltransferase (212 aa).

6 helical membrane-spanning segments follow: residues 8 to 28 (IFLS…PFAV), 59 to 79 (AAAA…LWLA), 90 to 110 (VFAL…FLGF), 122 to 142 (ILLA…VIIA), 148 to 168 (SSLA…FGSG), and 169 to 189 (VAWY…LLLF).

The protein belongs to the PlsY family. As to quaternary structure, probably interacts with PlsX.

Its subcellular location is the cell inner membrane. The enzyme catalyses an acyl phosphate + sn-glycerol 3-phosphate = a 1-acyl-sn-glycero-3-phosphate + phosphate. The protein operates within lipid metabolism; phospholipid metabolism. In terms of biological role, catalyzes the transfer of an acyl group from acyl-phosphate (acyl-PO(4)) to glycerol-3-phosphate (G3P) to form lysophosphatidic acid (LPA). This enzyme utilizes acyl-phosphate as fatty acyl donor, but not acyl-CoA or acyl-ACP. This is Glycerol-3-phosphate acyltransferase from Bordetella petrii (strain ATCC BAA-461 / DSM 12804 / CCUG 43448).